We begin with the raw amino-acid sequence, 156 residues long: Cyanate hydratase (156 aa).

Residues Arg96, Glu99, and Ser122 contribute to the active site.

It belongs to the cyanase family.

The enzyme catalyses cyanate + hydrogencarbonate + 3 H(+) = NH4(+) + 2 CO2. Its function is as follows. Catalyzes the reaction of cyanate with bicarbonate to produce ammonia and carbon dioxide. This Pseudomonas fluorescens (strain ATCC BAA-477 / NRRL B-23932 / Pf-5) protein is Cyanate hydratase.